The sequence spans 274 residues: Dermonecrotic toxin SdSicTox-betaIIB1ai (274 aa).

His-5 is a catalytic residue. Positions 25 and 27 each coordinate Mg(2+). His-41 acts as the Nucleophile in catalysis. Intrachain disulfides connect Cys-45/Cys-51 and Cys-47/Cys-190. Asp-85 is a Mg(2+) binding site.

This sequence belongs to the arthropod phospholipase D family. Class II subfamily. Mg(2+) is required as a cofactor. Expressed by the venom gland.

It is found in the secreted. The catalysed reaction is an N-(acyl)-sphingosylphosphocholine = an N-(acyl)-sphingosyl-1,3-cyclic phosphate + choline. It carries out the reaction an N-(acyl)-sphingosylphosphoethanolamine = an N-(acyl)-sphingosyl-1,3-cyclic phosphate + ethanolamine. It catalyses the reaction a 1-acyl-sn-glycero-3-phosphocholine = a 1-acyl-sn-glycero-2,3-cyclic phosphate + choline. The enzyme catalyses a 1-acyl-sn-glycero-3-phosphoethanolamine = a 1-acyl-sn-glycero-2,3-cyclic phosphate + ethanolamine. Its function is as follows. Dermonecrotic toxins cleave the phosphodiester linkage between the phosphate and headgroup of certain phospholipids (sphingolipid and lysolipid substrates), forming an alcohol (often choline) and a cyclic phosphate. This toxin acts on sphingomyelin (SM). It may also act on ceramide phosphoethanolamine (CPE), lysophosphatidylcholine (LPC) and lysophosphatidylethanolamine (LPE), but not on lysophosphatidylserine (LPS), and lysophosphatidylglycerol (LPG). It acts by transphosphatidylation, releasing exclusively cyclic phosphate products as second products. Induces dermonecrosis, hemolysis, increased vascular permeability, edema, inflammatory response, and platelet aggregation. The protein is Dermonecrotic toxin SdSicTox-betaIIB1ai of Sicarius cf. damarensis (strain GJB-2008) (Six-eyed sand spider).